Consider the following 334-residue polypeptide: N-acetyl-gamma-glutamyl-phosphate reductase (334 aa).

Cys145 is an active-site residue. Positions 173–192 (GISGSGQDPTEGTHYPNVTQ) are disordered.

This sequence belongs to the NAGSA dehydrogenase family. Type 1 subfamily.

It is found in the cytoplasm. The enzyme catalyses N-acetyl-L-glutamate 5-semialdehyde + phosphate + NADP(+) = N-acetyl-L-glutamyl 5-phosphate + NADPH + H(+). The protein operates within amino-acid biosynthesis; L-arginine biosynthesis; N(2)-acetyl-L-ornithine from L-glutamate: step 3/4. Its function is as follows. Catalyzes the NADPH-dependent reduction of N-acetyl-5-glutamyl phosphate to yield N-acetyl-L-glutamate 5-semialdehyde. The protein is N-acetyl-gamma-glutamyl-phosphate reductase of Methanocella arvoryzae (strain DSM 22066 / NBRC 105507 / MRE50).